The chain runs to 86 residues: Acyl carrier protein (86 aa).

The Carrier domain occupies 10–85 (DKIEQKVIEM…DVIKYIKERQ (76 aa)). S45 is modified (O-(pantetheine 4'-phosphoryl)serine).

This sequence belongs to the acyl carrier protein (ACP) family. In terms of processing, 4'-phosphopantetheine is transferred from CoA to a specific serine of apo-ACP by AcpS. This modification is essential for activity because fatty acids are bound in thioester linkage to the sulfhydryl of the prosthetic group.

It localises to the cytoplasm. The protein operates within lipid metabolism; fatty acid biosynthesis. In terms of biological role, carrier of the growing fatty acid chain in fatty acid biosynthesis. The polypeptide is Acyl carrier protein (Rickettsia prowazekii (strain Madrid E)).